Here is a 145-residue protein sequence, read N- to C-terminus: MIALIQRVTRASVTVEGEVTGEIGAGLLVLLGVEKDDDEQKANRLCERVLGYRIFSDADGKMNLNVQQAGGSVLVVSQFTLAADTERGMRPSFSKGASPDRAEALYDYFVERCRQQEMNTQTGRFAADMQVSLVNDGPVTFWLQV.

The Gly-cisPro motif, important for rejection of L-amino acids signature appears at 137–138 (GP).

It belongs to the DTD family. As to quaternary structure, homodimer.

It localises to the cytoplasm. It carries out the reaction glycyl-tRNA(Ala) + H2O = tRNA(Ala) + glycine + H(+). The catalysed reaction is a D-aminoacyl-tRNA + H2O = a tRNA + a D-alpha-amino acid + H(+). An aminoacyl-tRNA editing enzyme that deacylates mischarged D-aminoacyl-tRNAs. Also deacylates mischarged glycyl-tRNA(Ala), protecting cells against glycine mischarging by AlaRS. Acts via tRNA-based rather than protein-based catalysis; rejects L-amino acids rather than detecting D-amino acids in the active site. By recycling D-aminoacyl-tRNA to D-amino acids and free tRNA molecules, this enzyme counteracts the toxicity associated with the formation of D-aminoacyl-tRNA entities in vivo and helps enforce protein L-homochirality. The protein is D-aminoacyl-tRNA deacylase of Escherichia coli O81 (strain ED1a).